The sequence spans 389 residues: Phosphopentomutase (389 aa).

Residues Asp9, Asp282, His287, Asp323, His324, and His335 each coordinate Mn(2+).

It belongs to the phosphopentomutase family. It depends on Mn(2+) as a cofactor.

The protein localises to the cytoplasm. The catalysed reaction is 2-deoxy-alpha-D-ribose 1-phosphate = 2-deoxy-D-ribose 5-phosphate. The enzyme catalyses alpha-D-ribose 1-phosphate = D-ribose 5-phosphate. It participates in carbohydrate degradation; 2-deoxy-D-ribose 1-phosphate degradation; D-glyceraldehyde 3-phosphate and acetaldehyde from 2-deoxy-alpha-D-ribose 1-phosphate: step 1/2. Its function is as follows. Isomerase that catalyzes the conversion of deoxy-ribose 1-phosphate (dRib-1-P) and ribose 1-phosphate (Rib-1-P) to deoxy-ribose 5-phosphate (dRib-5-P) and ribose 5-phosphate (Rib-5-P), respectively. This is Phosphopentomutase from Pseudothermotoga lettingae (strain ATCC BAA-301 / DSM 14385 / NBRC 107922 / TMO) (Thermotoga lettingae).